Here is a 270-residue protein sequence, read N- to C-terminus: 5'-AMP-activated protein kinase subunit beta-1 (270 aa).

Residues 1-44 (MGNTSSERAALERQAGHKTPRRDSSGGAKDGDRPKILMDSPEDA) form a disordered region. The N-myristoyl glycine moiety is linked to residue Gly-2. Residue Thr-4 is modified to Phosphothreonine. Ser-5 and Ser-6 each carry phosphoserine. Over residues 9–36 (AALERQAGHKTPRRDSSGGAKDGDRPKI) the composition is skewed to basic and acidic residues. At Thr-19 the chain carries Phosphothreonine. Residues Ser-24 and Ser-25 each carry the phosphoserine; by autocatalysis modification. A phosphoserine mark is found at Ser-40, Ser-96, and Ser-101. The segment at 68–163 (EANDKAPAQA…QVKKTDFEVF (96 aa)) is glycogen-binding domain. At Ser-108 the chain carries Phosphoserine; by autocatalysis. Position 148 is a phosphothreonine (Thr-148). Phosphoserine is present on Ser-182. Lys-201 bears the N6-succinyllysine mark.

The protein belongs to the 5'-AMP-activated protein kinase beta subunit family. In terms of assembly, AMPK is a heterotrimer of an alpha catalytic subunit (PRKAA1 or PRKAA2), a beta (PRKAB1 or PRKAB2) and a gamma non-catalytic subunits (PRKAG1, PRKAG2 or PRKAG3). Interacts with FNIP1 and FNIP2. Post-translationally, phosphorylated when associated with the catalytic subunit (PRKAA1 or PRKAA2). Phosphorylated by ULK1; leading to negatively regulate AMPK activity and suggesting the existence of a regulatory feedback loop between ULK1 and AMPK.

In terms of biological role, non-catalytic subunit of AMP-activated protein kinase (AMPK), an energy sensor protein kinase that plays a key role in regulating cellular energy metabolism. In response to reduction of intracellular ATP levels, AMPK activates energy-producing pathways and inhibits energy-consuming processes: inhibits protein, carbohydrate and lipid biosynthesis, as well as cell growth and proliferation. AMPK acts via direct phosphorylation of metabolic enzymes, and by longer-term effects via phosphorylation of transcription regulators. Also acts as a regulator of cellular polarity by remodeling the actin cytoskeleton; probably by indirectly activating myosin. Beta non-catalytic subunit acts as a scaffold on which the AMPK complex assembles, via its C-terminus that bridges alpha (PRKAA1 or PRKAA2) and gamma subunits (PRKAG1, PRKAG2 or PRKAG3). The chain is 5'-AMP-activated protein kinase subunit beta-1 (Prkab1) from Mus musculus (Mouse).